The following is a 267-amino-acid chain: Oxidoreductase ordB (267 aa).

The protein belongs to the avfA family.

It participates in mycotoxin biosynthesis. Its function is as follows. Oxidoreductase; part of the fragmented gene cluster that mediates the biosynthesis of dothistromin (DOTH), a polyketide toxin very similar in structure to the aflatoxin precursor, versicolorin B. The first step of the pathway is the conversion of acetate to norsolorinic acid (NOR) and requires the fatty acid synthase subunits hexA and hexB, as well as the polyketide synthase pksA. PksA combines a hexanoyl starter unit and 7 malonyl-CoA extender units to synthesize the precursor NOR. The hexanoyl starter unit is provided to the acyl-carrier protein (ACP) domain by the fungal fatty acid synthase hexA/hexB. The second step is the conversion of NOR to averantin (AVN) and requires the norsolorinic acid ketoreductase nor1, which catalyzes the dehydration of norsolorinic acid to form (1'S)-averantin. The cytochrome P450 monooxygenase avnA then catalyzes the hydroxylation of AVN to 5'hydroxyaverantin (HAVN). The next step is performed by adhA that transforms HAVN to averufin (AVF). Averufin might then be converted to hydroxyversicolorone by cypX and avfA. Hydroxyversicolorone is further converted versiconal hemiacetal acetate (VHA) by moxY. VHA is then the substrate for the versiconal hemiacetal acetate esterase est1 to yield versiconal (VAL). Versicolorin B synthase vbsA then converts VAL to versicolorin B (VERB) by closing the bisfuran ring. Then, the activity of the versicolorin B desaturase verB leads to versicolorin A (VERA). DotB, a predicted chloroperoxidase, may perform epoxidation of the A-ring of VERA. Alternatively, a cytochrome P450, such as cypX or avnA could catalyze this step. It is also possible that another, uncharacterized, cytochrome P450 enzyme is responsible for this step. Opening of the epoxide could potentially be achieved by the epoxide hydrolase epoA. However, epoA seems not to be required for DOTH biosynthesis, but other epoxide hydrolases may have the ability to complement this hydrolysis. Alternatively, opening of the epoxide ring could be achieved non-enzymatically. The next step is the deoxygenation of ring A to yield the 5,8-dihydroxyanthraquinone which is most likely catalyzed by the NADPH dehydrogenase encoded by ver1. The last stages of DOTH biosynthesis are proposed to involve hydroxylation of the bisfuran. OrdB and norB might have oxidative roles here. An alternative possibility is that cytochrome P450 monoogenases such as avnA and cypX might perform these steps in addition to previously proposed steps. The chain is Oxidoreductase ordB from Dothistroma septosporum (strain NZE10 / CBS 128990) (Red band needle blight fungus).